Consider the following 84-residue polypeptide: Molybdopterin synthase sulfur carrier subunit (84 aa).

A 1-thioglycine; alternate modification is found at glycine 84. Glycine 84 carries the glycyl adenylate; alternate modification.

It belongs to the MoaD family. MOCS2A subfamily. Heterotetramer; composed of 2 small (MOCS2A) and 2 large (MOCS2B) subunits. Post-translationally, C-terminal thiocarboxylation occurs in 2 steps, it is first acyl-adenylated (-COAMP) via the hesA/moeB/thiF part of MOCS3, then thiocarboxylated (-COSH) via the rhodanese domain of MOCS3.

The protein localises to the cytoplasm. It functions in the pathway cofactor biosynthesis; molybdopterin biosynthesis. Acts as a sulfur carrier required for molybdopterin biosynthesis. Component of the molybdopterin synthase complex that catalyzes the conversion of precursor Z into molybdopterin by mediating the incorporation of 2 sulfur atoms into precursor Z to generate a dithiolene group. In the complex, serves as sulfur donor by being thiocarboxylated (-COSH) at its C-terminus by MOCS3. After interaction with MOCS2B, the sulfur is then transferred to precursor Z to form molybdopterin. The sequence is that of Molybdopterin synthase sulfur carrier subunit from Caenorhabditis briggsae.